The primary structure comprises 419 residues: Serine/threonine-protein kinase Kist (419 aa).

In terms of domain architecture, Protein kinase spans 23 to 304; it reads WQVQSRLGSG…AEMALCSPFF (282 aa). ATP-binding positions include 29–37 and Lys54; that span reads LGSGSSASV. Catalysis depends on proton acceptor residues Asp141 and Asp158. The region spanning 324 to 406 is the RRM domain; sequence RLLNVLDDDY…KFVVATFYPL (83 aa).

It belongs to the protein kinase superfamily. Ser/Thr protein kinase family. In terms of assembly, interacts with stathmin and CDKN1B/p27Kip1 Interacts with PAM. As to expression, in the embryo, preferentially expressed in the developing nervous system.

The protein resides in the cytoplasm. It is found in the nucleus. It catalyses the reaction L-seryl-[protein] + ATP = O-phospho-L-seryl-[protein] + ADP + H(+). The enzyme catalyses L-threonyl-[protein] + ATP = O-phospho-L-threonyl-[protein] + ADP + H(+). In terms of biological role, upon serum stimulation, phosphorylates CDKN1B/p27Kip1, thus controlling CDKN1B subcellular location and cell cycle progression in G1 phase. May be involved in trafficking and/or processing of RNA. In Rattus norvegicus (Rat), this protein is Serine/threonine-protein kinase Kist (Uhmk1).